We begin with the raw amino-acid sequence, 104 residues long: Large ribosomal subunit protein uL24 (104 aa).

Belongs to the universal ribosomal protein uL24 family. In terms of assembly, part of the 50S ribosomal subunit.

Functionally, one of two assembly initiator proteins, it binds directly to the 5'-end of the 23S rRNA, where it nucleates assembly of the 50S subunit. Its function is as follows. One of the proteins that surrounds the polypeptide exit tunnel on the outside of the subunit. This Corynebacterium jeikeium (strain K411) protein is Large ribosomal subunit protein uL24.